Consider the following 281-residue polypeptide: Carbonic anhydrase (281 aa).

Zn(2+)-binding residues include Cys-106, His-161, and Cys-164.

It belongs to the beta-class carbonic anhydrase family. It depends on Zn(2+) as a cofactor.

It is found in the cytoplasm. It localises to the nucleus. Its subcellular location is the mitochondrion intermembrane space. It carries out the reaction hydrogencarbonate + H(+) = CO2 + H2O. With respect to regulation, amines and amino acids act as activators of catalytic activity, whereas natural product-based phenols, dithiocarbamates, aliphatic and aromatic carboxylates, boronic acids, and sulfonamides act as inhibitors of enzymatic activity. Also inhibited by anions such as cyanide and carbonate, and to a lesser extent by sulfate, phenylboronic, and phenyl arsonic acid. In terms of biological role, catalyzes the reversible hydration of CO(2) to H(2)CO(3). The main role may be to provide inorganic carbon for the bicarbonate-dependent carboxylation reactions catalyzed by pyruvate carboxylase, acetyl-CoA carboxylase and carbamoyl-phosphate synthetase. Involved in protection against oxidative damage. Acts as a CO(2) chemosensor and induces CO(2)-mediated filamentation. Essential for pathological growth in niches where sufficient CO(2) is not supplied by the host. Necessary for white-to-opaque switching at low CO(2) concentrations. This is Carbonic anhydrase (NCE103) from Candida albicans (strain SC5314 / ATCC MYA-2876) (Yeast).